We begin with the raw amino-acid sequence, 202 residues long: Imidazoleglycerol-phosphate dehydratase (202 aa).

The protein belongs to the imidazoleglycerol-phosphate dehydratase family.

Its subcellular location is the cytoplasm. The catalysed reaction is D-erythro-1-(imidazol-4-yl)glycerol 3-phosphate = 3-(imidazol-4-yl)-2-oxopropyl phosphate + H2O. Its pathway is amino-acid biosynthesis; L-histidine biosynthesis; L-histidine from 5-phospho-alpha-D-ribose 1-diphosphate: step 6/9. This chain is Imidazoleglycerol-phosphate dehydratase, found in Brucella abortus (strain S19).